We begin with the raw amino-acid sequence, 511 residues long: Maturase K (511 aa).

This sequence belongs to the intron maturase 2 family. MatK subfamily.

It is found in the plastid. Its subcellular location is the chloroplast. Its function is as follows. Usually encoded in the trnK tRNA gene intron. Probably assists in splicing its own and other chloroplast group II introns. The sequence is that of Maturase K from Poa pratensis (Kentucky bluegrass).